Reading from the N-terminus, the 139-residue chain is Large ribosomal subunit protein uL16 (139 aa).

A compositionally biased stretch (basic residues) spans 1-17; the sequence is MLMPKRVKYRKSQRGRM. Positions 1-24 are disordered; sequence MLMPKRVKYRKSQRGRMKGNSGRG.

The protein belongs to the universal ribosomal protein uL16 family. In terms of assembly, part of the 50S ribosomal subunit.

Binds 23S rRNA and is also seen to make contacts with the A and possibly P site tRNAs. The polypeptide is Large ribosomal subunit protein uL16 (Chlorobium limicola (strain DSM 245 / NBRC 103803 / 6330)).